The sequence spans 170 residues: uncharacterized protein (170 aa).

Residues 1 to 148 (MVKSQKVIDV…TIHDFFENAT (148 aa)) enclose the Ferritin-like diiron domain.

This is an uncharacterized protein from Ureaplasma parvum serovar 3 (strain ATCC 700970).